Reading from the N-terminus, the 165-residue chain is Putative defense protein Hdd11 (165 aa).

A signal peptide spans 1–17 (MWATYVFIAVSLACANG). The Reelin domain occupies 18–165 (YSSGAPESVC…VESGPVKVIS (148 aa)). A disulfide bond links Cys-27 and Cys-104.

The protein belongs to the insect defense protein family.

It is found in the secreted. Functionally, as this protein is expressed upon bacterial infection, it may have antimicrobial activity. This Hyphantria cunea (Fall webworm moth) protein is Putative defense protein Hdd11.